The sequence spans 273 residues: Ribosomal RNA small subunit methyltransferase A (273 aa).

Positions 17, 19, 44, 65, and 111 each coordinate S-adenosyl-L-methionine.

This sequence belongs to the class I-like SAM-binding methyltransferase superfamily. rRNA adenine N(6)-methyltransferase family. RsmA subfamily.

It localises to the cytoplasm. The enzyme catalyses adenosine(1518)/adenosine(1519) in 16S rRNA + 4 S-adenosyl-L-methionine = N(6)-dimethyladenosine(1518)/N(6)-dimethyladenosine(1519) in 16S rRNA + 4 S-adenosyl-L-homocysteine + 4 H(+). Functionally, specifically dimethylates two adjacent adenosines (A1518 and A1519) in the loop of a conserved hairpin near the 3'-end of 16S rRNA in the 30S particle. May play a critical role in biogenesis of 30S subunits. The sequence is that of Ribosomal RNA small subunit methyltransferase A from Buchnera aphidicola subsp. Acyrthosiphon pisum (strain APS) (Acyrthosiphon pisum symbiotic bacterium).